A 256-amino-acid chain; its full sequence is DNA repair protein RecO (256 aa).

Belongs to the RecO family.

In terms of biological role, involved in DNA repair and RecF pathway recombination. The chain is DNA repair protein RecO from Streptococcus equi subsp. zooepidemicus (strain MGCS10565).